Here is a 440-residue protein sequence, read N- to C-terminus: Methionine aminopeptidase 2-2 (440 aa).

The tract at residues 1–102 (MAAQVPTEAL…KGQEEEYRDE (102 aa)) is disordered. Positions 36-46 (DSDDSDEEGEE) are enriched in acidic residues. Positions 56 to 70 (AKKKKKNKKKKKKKS) are enriched in basic residues. His-194 lines the substrate pocket. Residues Asp-214, Asp-225, and His-294 each coordinate a divalent metal cation. Position 302 (His-302) interacts with substrate. The a divalent metal cation site is built by Glu-327 and Glu-421.

This sequence belongs to the peptidase M24A family. Methionine aminopeptidase eukaryotic type 2 subfamily. It depends on Co(2+) as a cofactor. Zn(2+) is required as a cofactor. The cofactor is Mn(2+). Fe(2+) serves as cofactor.

The protein localises to the cytoplasm. It carries out the reaction Release of N-terminal amino acids, preferentially methionine, from peptides and arylamides.. Functionally, cotranslationally removes the N-terminal methionine from nascent proteins. The N-terminal methionine is often cleaved when the second residue in the primary sequence is small and uncharged (Met-Ala-, Cys, Gly, Pro, Ser, Thr, or Val). In Colletotrichum graminicola (strain M1.001 / M2 / FGSC 10212) (Maize anthracnose fungus), this protein is Methionine aminopeptidase 2-2.